The sequence spans 538 residues: Endoglucanase 16 (538 aa).

The signal sequence occupies residues 1 to 26 (MRWRRVGDVVAVALLLGAAAAAAAAA). Catalysis depends on D83, which acts as the Nucleophile. Residues H431, D483, and E492 contribute to the active site. The tract at residues 513-538 (RQESPSTTTTTTATTSSPEMGLSVNR) is disordered. Positions 516–530 (SPSTTTTTTATTSSP) are enriched in low complexity.

This sequence belongs to the glycosyl hydrolase 9 (cellulase E) family.

It is found in the secreted. It carries out the reaction Endohydrolysis of (1-&gt;4)-beta-D-glucosidic linkages in cellulose, lichenin and cereal beta-D-glucans.. This Oryza sativa subsp. japonica (Rice) protein is Endoglucanase 16.